A 359-amino-acid polypeptide reads, in one-letter code: Protein RecA (359 aa).

ATP is bound at residue 74–81 (GPESSGKT).

The protein belongs to the RecA family.

It localises to the cytoplasm. Its function is as follows. Can catalyze the hydrolysis of ATP in the presence of single-stranded DNA, the ATP-dependent uptake of single-stranded DNA by duplex DNA, and the ATP-dependent hybridization of homologous single-stranded DNAs. It interacts with LexA causing its activation and leading to its autocatalytic cleavage. The protein is Protein RecA of Anaplasma marginale (strain St. Maries).